A 517-amino-acid chain; its full sequence is Cytochrome P450 monooxygenase ausI (517 aa).

Residues 8–28 (LAPLGQPWIAGLVVVSAVLYL) form a helical membrane-spanning segment. Position 457 (Cys-457) interacts with heme.

It belongs to the cytochrome P450 family. It depends on heme as a cofactor.

It localises to the membrane. Its pathway is secondary metabolite biosynthesis; terpenoid biosynthesis. In terms of biological role, cytochrome P450 monooxygenase; part of the gene cluster that mediates the biosynthesis of calidodehydroaustin, a fungal meroterpenoid. The first step of the pathway is the synthesis of 3,5-dimethylorsellinic acid by the polyketide synthase ausA. 3,5-dimethylorsellinic acid is then prenylated by the polyprenyl transferase ausN. Further epoxidation by the FAD-dependent monooxygenase ausM and cyclization by the probable terpene cyclase ausL lead to the formation of protoaustinoid A. Protoaustinoid A is then oxidized to spiro-lactone preaustinoid A3 by the combined action of the FAD-binding monooxygenases ausB and ausC, and the dioxygenase ausE. Acid-catalyzed keto-rearrangement and ring contraction of the tetraketide portion of preaustinoid A3 by ausJ lead to the formation of preaustinoid A4. The aldo-keto reductase ausK, with the help of ausH, is involved in the next step by transforming preaustinoid A4 into isoaustinone which is in turn hydroxylated by the P450 monooxygenase ausI to form austinolide. The cytochrome P450 monooxygenase ausG modifies austinolide to austinol. Austinol is further acetylated to austin by the O-acetyltransferase ausP, which spontaneously changes to dehydroaustin. The cytochrome P450 monooxygenase ausR then converts dehydroaustin is into 7-dehydrodehydroaustin. The hydroxylation catalyzed by ausR permits the O-acetyltransferase ausQ to add an additional acetyl group to the molecule, leading to the formation of acetoxydehydroaustin. The short chain dehydrogenase ausT catalyzes the reduction of the double bond present between carbon atoms 1 and 2 to convert 7-dehydrodehydroaustin into 1,2-dihydro-7-hydroxydehydroaustin. AusQ catalyzes not only an acetylation reaction but also the addition of the PKS ausV diketide product to 1,2-dihydro-7-hydroxydehydroaustin, forming precalidodehydroaustin. Finally, the iron/alpha-ketoglutarate-dependent dioxygenase converts precalidodehydroaustin into calidodehydroaustin. The sequence is that of Cytochrome P450 monooxygenase ausI from Aspergillus calidoustus.